We begin with the raw amino-acid sequence, 192 residues long: Phosphoheptose isomerase (192 aa).

Residues 34-192 form the SIS domain; that stretch reads VVDAYKAGNK…VERELFVKGK (159 aa). 49–51 is a substrate binding site; that stretch reads NGG. Residues H58 and E62 each coordinate Zn(2+). Substrate contacts are provided by residues E62, 91-92, 117-119, S122, and Q169; these read ND and STS. Zn(2+) contacts are provided by Q169 and H177.

This sequence belongs to the SIS family. GmhA subfamily. Homotetramer. Requires Zn(2+) as cofactor.

It localises to the cytoplasm. It catalyses the reaction 2 D-sedoheptulose 7-phosphate = D-glycero-alpha-D-manno-heptose 7-phosphate + D-glycero-beta-D-manno-heptose 7-phosphate. Its pathway is carbohydrate biosynthesis; D-glycero-D-manno-heptose 7-phosphate biosynthesis; D-glycero-alpha-D-manno-heptose 7-phosphate and D-glycero-beta-D-manno-heptose 7-phosphate from sedoheptulose 7-phosphate: step 1/1. Functionally, catalyzes the isomerization of sedoheptulose 7-phosphate in D-glycero-D-manno-heptose 7-phosphate. In Citrifermentans bemidjiense (strain ATCC BAA-1014 / DSM 16622 / JCM 12645 / Bem) (Geobacter bemidjiensis), this protein is Phosphoheptose isomerase.